A 289-amino-acid polypeptide reads, in one-letter code: Glycine--tRNA ligase alpha subunit (289 aa).

The protein belongs to the class-II aminoacyl-tRNA synthetase family. As to quaternary structure, tetramer of two alpha and two beta subunits.

The protein resides in the cytoplasm. It carries out the reaction tRNA(Gly) + glycine + ATP = glycyl-tRNA(Gly) + AMP + diphosphate. This Nitratidesulfovibrio vulgaris (strain ATCC 29579 / DSM 644 / CCUG 34227 / NCIMB 8303 / VKM B-1760 / Hildenborough) (Desulfovibrio vulgaris) protein is Glycine--tRNA ligase alpha subunit.